The primary structure comprises 342 residues: Glycerol-3-phosphate dehydrogenase [NAD(P)+] (342 aa).

Serine 13, tryptophan 14, and lysine 108 together coordinate NADPH. Residues lysine 108, glycine 139, and serine 141 each coordinate sn-glycerol 3-phosphate. Residue alanine 143 coordinates NADPH. Sn-glycerol 3-phosphate-binding residues include lysine 194, aspartate 247, serine 257, arginine 258, and asparagine 259. Lysine 194 (proton acceptor) is an active-site residue. NADPH is bound at residue arginine 258. Residues valine 282 and glutamate 284 each coordinate NADPH.

Belongs to the NAD-dependent glycerol-3-phosphate dehydrogenase family.

It localises to the cytoplasm. The catalysed reaction is sn-glycerol 3-phosphate + NAD(+) = dihydroxyacetone phosphate + NADH + H(+). It carries out the reaction sn-glycerol 3-phosphate + NADP(+) = dihydroxyacetone phosphate + NADPH + H(+). Its pathway is membrane lipid metabolism; glycerophospholipid metabolism. Functionally, catalyzes the reduction of the glycolytic intermediate dihydroxyacetone phosphate (DHAP) to sn-glycerol 3-phosphate (G3P), the key precursor for phospholipid synthesis. This is Glycerol-3-phosphate dehydrogenase [NAD(P)+] from Lactococcus lactis subsp. cremoris (strain MG1363).